A 419-amino-acid polypeptide reads, in one-letter code: Ras association domain-containing protein 8 (419 aa).

Residues 1-82 enclose the Ras-associating domain; that stretch reads MELKVWVDGV…VQLILRRTGP (82 aa). 2 positions are modified to phosphoserine: S105 and S129. Residue T131 is modified to Phosphothreonine. Residues 372-399 form a disordered region; it reads ASQADIETEAPFQSGSLKRPGSSRQLPS. The segment covering 382–399 has biased composition (polar residues); that stretch reads PFQSGSLKRPGSSRQLPS. S387 bears the Phosphoserine mark.

In Mus musculus (Mouse), this protein is Ras association domain-containing protein 8 (Rassf8).